A 130-amino-acid chain; its full sequence is Small ribosomal subunit protein uS8 (130 aa).

The protein belongs to the universal ribosomal protein uS8 family. As to quaternary structure, part of the 30S ribosomal subunit. Contacts proteins S5 and S12.

Functionally, one of the primary rRNA binding proteins, it binds directly to 16S rRNA central domain where it helps coordinate assembly of the platform of the 30S subunit. The protein is Small ribosomal subunit protein uS8 of Haemophilus ducreyi (strain 35000HP / ATCC 700724).